Consider the following 440-residue polypeptide: Ribosomal protein uS12 methylthiotransferase RimO (440 aa).

The MTTase N-terminal domain maps to 6–116 (PKVGFVSLGC…VVSAVHEVVP (111 aa)). [4Fe-4S] cluster is bound by residues Cys15, Cys51, Cys80, Cys149, Cys153, and Cys156. In terms of domain architecture, Radical SAM core spans 135 to 374 (LTPRHYAYLK…AHQQAISSAR (240 aa)). The TRAM domain occupies 376 to 440 (QAKIGLEMDV…DEYDMWGELV (65 aa)).

The protein belongs to the methylthiotransferase family. RimO subfamily. The cofactor is [4Fe-4S] cluster.

The protein resides in the cytoplasm. It carries out the reaction L-aspartate(89)-[ribosomal protein uS12]-hydrogen + (sulfur carrier)-SH + AH2 + 2 S-adenosyl-L-methionine = 3-methylsulfanyl-L-aspartate(89)-[ribosomal protein uS12]-hydrogen + (sulfur carrier)-H + 5'-deoxyadenosine + L-methionine + A + S-adenosyl-L-homocysteine + 2 H(+). Catalyzes the methylthiolation of an aspartic acid residue of ribosomal protein uS12. This is Ribosomal protein uS12 methylthiotransferase RimO from Ectopseudomonas mendocina (strain ymp) (Pseudomonas mendocina).